Reading from the N-terminus, the 331-residue chain is Beta-ketoacyl-[acyl-carrier-protein] synthase III (331 aa).

Residues cysteine 116 and histidine 256 contribute to the active site. The ACP-binding stretch occupies residues 257–261; it reads QANTR. The active site involves asparagine 286.

It belongs to the thiolase-like superfamily. FabH family. As to quaternary structure, homodimer.

It is found in the cytoplasm. The enzyme catalyses malonyl-[ACP] + acetyl-CoA + H(+) = 3-oxobutanoyl-[ACP] + CO2 + CoA. It participates in lipid metabolism; fatty acid biosynthesis. Catalyzes the condensation reaction of fatty acid synthesis by the addition to an acyl acceptor of two carbons from malonyl-ACP. Catalyzes the first condensation reaction which initiates fatty acid synthesis and may therefore play a role in governing the total rate of fatty acid production. Possesses both acetoacetyl-ACP synthase and acetyl transacylase activities. Its substrate specificity determines the biosynthesis of branched-chain and/or straight-chain of fatty acids. The chain is Beta-ketoacyl-[acyl-carrier-protein] synthase III from Caldanaerobacter subterraneus subsp. tengcongensis (strain DSM 15242 / JCM 11007 / NBRC 100824 / MB4) (Thermoanaerobacter tengcongensis).